A 540-amino-acid polypeptide reads, in one-letter code: Sesquiterpene synthase 15b (540 aa).

Residues aspartate 292, aspartate 296, and glutamate 445 each contribute to the Mg(2+) site. The short motif at 292 to 296 is the DDXXD motif element; sequence DDIYD.

It belongs to the terpene synthase family. Tpsa subfamily. Mg(2+) is required as a cofactor. It depends on Mn(2+) as a cofactor.

It carries out the reaction (2E,6E)-farnesyl diphosphate = germacrene A + diphosphate. It functions in the pathway secondary metabolite biosynthesis; terpenoid biosynthesis. Functionally, sesquiterpene synthase involved in the biosynthesis of volatile compounds. Mediates the conversion of (2E,6E)-farnesyl diphosphate (FPP) into germacrene A. This chain is Sesquiterpene synthase 15b, found in Solanum habrochaites (Wild tomato).